Here is a 427-residue protein sequence, read N- to C-terminus: Glutamyl-tRNA reductase (427 aa).

Substrate is bound by residues T48–R51, S99, E104–Q106, and Q110. The Nucleophile role is filled by C49. G179–G184 contacts NADP(+).

Belongs to the glutamyl-tRNA reductase family. In terms of assembly, homodimer.

The enzyme catalyses (S)-4-amino-5-oxopentanoate + tRNA(Glu) + NADP(+) = L-glutamyl-tRNA(Glu) + NADPH + H(+). It functions in the pathway porphyrin-containing compound metabolism; protoporphyrin-IX biosynthesis; 5-aminolevulinate from L-glutamyl-tRNA(Glu): step 1/2. Functionally, catalyzes the NADPH-dependent reduction of glutamyl-tRNA(Glu) to glutamate 1-semialdehyde (GSA). This is Glutamyl-tRNA reductase from Methanocella arvoryzae (strain DSM 22066 / NBRC 105507 / MRE50).